The following is a 524-amino-acid chain: Light-independent protochlorophyllide reductase subunit B (524 aa).

Asp36 is a [4Fe-4S] cluster binding site. The active-site Proton donor is Asp290. 425 to 426 (GL) provides a ligand contact to substrate.

It belongs to the ChlB/BchB/BchZ family. In terms of assembly, protochlorophyllide reductase is composed of three subunits; ChlL, ChlN and ChlB. Forms a heterotetramer of two ChlB and two ChlN subunits. [4Fe-4S] cluster serves as cofactor.

The enzyme catalyses chlorophyllide a + oxidized 2[4Fe-4S]-[ferredoxin] + 2 ADP + 2 phosphate = protochlorophyllide a + reduced 2[4Fe-4S]-[ferredoxin] + 2 ATP + 2 H2O. It functions in the pathway porphyrin-containing compound metabolism; chlorophyll biosynthesis (light-independent). Its function is as follows. Component of the dark-operative protochlorophyllide reductase (DPOR) that uses Mg-ATP and reduced ferredoxin to reduce ring D of protochlorophyllide (Pchlide) to form chlorophyllide a (Chlide). This reaction is light-independent. The NB-protein (ChlN-ChlB) is the catalytic component of the complex. In Synechococcus sp. (strain CC9605), this protein is Light-independent protochlorophyllide reductase subunit B.